The following is a 185-amino-acid chain: Large ribosomal subunit protein uL22 (185 aa).

It belongs to the universal ribosomal protein uL22 family. In terms of assembly, part of the 50S ribosomal subunit.

This protein binds specifically to 23S rRNA. It makes multiple contacts with different domains of the 23S rRNA in the assembled 50S subunit and ribosome. In terms of biological role, the globular domain of the protein is located near the polypeptide exit tunnel on the outside of the subunit, while an extended beta-hairpin is found that lines the wall of the exit tunnel in the center of the 70S ribosome. The sequence is that of Large ribosomal subunit protein uL22 from Pyrobaculum islandicum (strain DSM 4184 / JCM 9189 / GEO3).